The chain runs to 237 residues: Chalcone--flavanone isomerase 1 (237 aa).

Substrate is bound by residues threonine 48, asparagine 113, and serine 190.

Belongs to the chalcone isomerase family.

The catalysed reaction is a chalcone = a flavanone.. It functions in the pathway secondary metabolite biosynthesis; flavonoid biosynthesis. In terms of biological role, catalyzes the intramolecular cyclization of bicyclic chalcones into tricyclic (S)-flavanones. Responsible for the isomerization of 4,2',4',6'-tetrahydroxychalcone (also termed chalcone) into naringenin. This is Chalcone--flavanone isomerase 1 (CHI1) from Fragaria ananassa (Strawberry).